The chain runs to 334 residues: D-fructose 1,6-bisphosphatase class 2/sedoheptulose 1,7-bisphosphatase (334 aa).

Residues Asp33, Glu57, Asp85, and Glu88 each coordinate Mn(2+). Substrate-binding positions include Glu88 to Thr90, Tyr119, Arg164 to Arg166, and Asp186 to Asp188. Residue Glu213 coordinates Mn(2+).

Belongs to the FBPase class 2 family. Homotetramer. It depends on Mn(2+) as a cofactor.

It carries out the reaction beta-D-fructose 1,6-bisphosphate + H2O = beta-D-fructose 6-phosphate + phosphate. The enzyme catalyses D-sedoheptulose 1,7-bisphosphate + H2O = D-sedoheptulose 7-phosphate + phosphate. Its pathway is carbohydrate biosynthesis; Calvin cycle. In terms of biological role, catalyzes the hydrolysis of fructose 1,6-bisphosphate (Fru 1,6-P2) and sedoheptulose 1,7-bisphosphate (Sed 1,7-P2) to fructose 6-phosphate and sedoheptulose 7-phosphate, respectively. This is D-fructose 1,6-bisphosphatase class 2/sedoheptulose 1,7-bisphosphatase from Prochlorococcus marinus (strain MIT 9313).